The primary structure comprises 413 residues: Multifunctional CCA protein (413 aa).

The ATP site is built by Gly8 and Arg11. The CTP site is built by Gly8 and Arg11. Residues Asp21 and Asp23 each contribute to the Mg(2+) site. ATP is bound by residues Arg91, Arg137, and Arg140. CTP is bound by residues Arg91, Arg137, and Arg140. The HD domain occupies 228-329; it reads TGIHTLMTLS…VKLFDNIDAW (102 aa).

The protein belongs to the tRNA nucleotidyltransferase/poly(A) polymerase family. Bacterial CCA-adding enzyme type 1 subfamily. Monomer. Can also form homodimers and oligomers. The cofactor is Mg(2+). Ni(2+) is required as a cofactor.

The enzyme catalyses a tRNA precursor + 2 CTP + ATP = a tRNA with a 3' CCA end + 3 diphosphate. It carries out the reaction a tRNA with a 3' CCA end + 2 CTP + ATP = a tRNA with a 3' CCACCA end + 3 diphosphate. In terms of biological role, catalyzes the addition and repair of the essential 3'-terminal CCA sequence in tRNAs without using a nucleic acid template. Adds these three nucleotides in the order of C, C, and A to the tRNA nucleotide-73, using CTP and ATP as substrates and producing inorganic pyrophosphate. tRNA 3'-terminal CCA addition is required both for tRNA processing and repair. Also involved in tRNA surveillance by mediating tandem CCA addition to generate a CCACCA at the 3' terminus of unstable tRNAs. While stable tRNAs receive only 3'-terminal CCA, unstable tRNAs are marked with CCACCA and rapidly degraded. The chain is Multifunctional CCA protein from Enterobacter sp. (strain 638).